The chain runs to 87 residues: Toxin CngtIII (87 aa).

Residues 1-19 form the signal peptide; the sequence is MNSLLMITACLVLFGTVWA. An LCN-type CS-alpha/beta domain is found at 20-85; sequence KEGYLVNKST…TYPLPNKTCS (66 aa). 4 disulfide bridges follow: C31/C84, C35/C60, C44/C65, and C48/C67.

It belongs to the long (4 C-C) scorpion toxin superfamily. Sodium channel inhibitor family. Beta subfamily. Expressed by the venom gland.

It is found in the secreted. Beta toxins bind voltage-independently at site-4 of sodium channels (Nav) and shift the voltage of activation toward more negative potentials thereby affecting sodium channel activation and promoting spontaneous and repetitive firing. The protein is Toxin CngtIII of Centruroides noxius (Mexican scorpion).